Here is a 52-residue protein sequence, read N- to C-terminus: MFDINLTHEQQQKAVEQIQELMAQGISSGEAIQIVAKALREIHKNDKKTPEN.

The protein belongs to the UPF0181 family.

This Haemophilus influenzae (strain ATCC 51907 / DSM 11121 / KW20 / Rd) protein is UPF0181 protein HI_1434.2.